Here is a 690-residue protein sequence, read N- to C-terminus: Glycine--tRNA ligase beta subunit (690 aa).

This sequence belongs to the class-II aminoacyl-tRNA synthetase family. Tetramer of two alpha and two beta subunits.

The protein resides in the cytoplasm. It carries out the reaction tRNA(Gly) + glycine + ATP = glycyl-tRNA(Gly) + AMP + diphosphate. The chain is Glycine--tRNA ligase beta subunit from Tolumonas auensis (strain DSM 9187 / NBRC 110442 / TA 4).